The primary structure comprises 116 residues: Large ribosomal subunit protein bL17 (116 aa).

Belongs to the bacterial ribosomal protein bL17 family. In terms of assembly, part of the 50S ribosomal subunit. Contacts protein L32.

The polypeptide is Large ribosomal subunit protein bL17 (Dictyoglomus thermophilum (strain ATCC 35947 / DSM 3960 / H-6-12)).